Reading from the N-terminus, the 296-residue chain is tRNA (guanine(9)-N1)-methyltransferase (296 aa).

Residues 1 to 33 (MTPETNNDETLSRPKPRAALPPVPEGMSKSQWK) form a disordered region. Residues 85–274 (TPRVNVNQKD…SVLPARKLAE (190 aa)) enclose the SAM-dependent MTase TRM10-type domain. Residues 181–182 (LT), Gly-201, 205–209 (DKNRH), Cys-213, Leu-227, and 239–241 (KVL) contribute to the S-adenosyl-L-methionine site. Asp-205 acts as the Proton acceptor in catalysis. The tract at residues 277–296 (DHAQESNSSSPAEEQDAQDI) is disordered.

This sequence belongs to the class IV-like SAM-binding methyltransferase superfamily. TRM10 family. As to quaternary structure, monomer.

It is found in the cytoplasm. The protein resides in the nucleus. The catalysed reaction is guanosine(9) in tRNA + S-adenosyl-L-methionine = N(1)-methylguanosine(9) in tRNA + S-adenosyl-L-homocysteine + H(+). In terms of biological role, S-adenosyl-L-methionine-dependent guanine N(1)-methyltransferase that catalyzes the formation of N(1)-methylguanine at position 9 (m1G9) in cytoplasmic tRNA. This is tRNA (guanine(9)-N1)-methyltransferase from Eremothecium gossypii (strain ATCC 10895 / CBS 109.51 / FGSC 9923 / NRRL Y-1056) (Yeast).